Consider the following 914-residue polypeptide: Isoleucine--tRNA ligase (914 aa).

A 'HIGH' region motif is present at residues 64-74 (PYANGNFHLGH). E557 is an L-isoleucyl-5'-AMP binding site. The short motif at 598-602 (PMSKS) is the 'KMSKS' region element. K601 serves as a coordination point for ATP. Zn(2+) contacts are provided by C889, C892, C906, and C909.

Belongs to the class-I aminoacyl-tRNA synthetase family. IleS type 1 subfamily. In terms of assembly, monomer. Zn(2+) serves as cofactor.

The protein localises to the cytoplasm. The catalysed reaction is tRNA(Ile) + L-isoleucine + ATP = L-isoleucyl-tRNA(Ile) + AMP + diphosphate. Its function is as follows. Catalyzes the attachment of isoleucine to tRNA(Ile). As IleRS can inadvertently accommodate and process structurally similar amino acids such as valine, to avoid such errors it has two additional distinct tRNA(Ile)-dependent editing activities. One activity is designated as 'pretransfer' editing and involves the hydrolysis of activated Val-AMP. The other activity is designated 'posttransfer' editing and involves deacylation of mischarged Val-tRNA(Ile). This Leptospira interrogans serogroup Icterohaemorrhagiae serovar copenhageni (strain Fiocruz L1-130) protein is Isoleucine--tRNA ligase.